The chain runs to 330 residues: ADP-L-glycero-D-manno-heptose-6-epimerase (330 aa).

Residues 10–11 (FI), 31–32 (DD), Lys38, Lys53, 74–78 (QGACS), and Asn91 contribute to the NADP(+) site. The active-site Proton acceptor is Tyr138. Position 142 (Lys142) interacts with NADP(+). Asn167 serves as a coordination point for substrate. Val168 and Lys176 together coordinate NADP(+). Lys176 functions as the Proton acceptor in the catalytic mechanism. Residues Arg178, His185, 199-202 (FAGW), Arg212, and Tyr291 contribute to the substrate site.

It belongs to the NAD(P)-dependent epimerase/dehydratase family. HldD subfamily. As to quaternary structure, homopentamer. Requires NADP(+) as cofactor.

The enzyme catalyses ADP-D-glycero-beta-D-manno-heptose = ADP-L-glycero-beta-D-manno-heptose. It functions in the pathway nucleotide-sugar biosynthesis; ADP-L-glycero-beta-D-manno-heptose biosynthesis; ADP-L-glycero-beta-D-manno-heptose from D-glycero-beta-D-manno-heptose 7-phosphate: step 4/4. In terms of biological role, catalyzes the interconversion between ADP-D-glycero-beta-D-manno-heptose and ADP-L-glycero-beta-D-manno-heptose via an epimerization at carbon 6 of the heptose. This Bordetella petrii (strain ATCC BAA-461 / DSM 12804 / CCUG 43448) protein is ADP-L-glycero-D-manno-heptose-6-epimerase.